Consider the following 395-residue polypeptide: Mitogen-activated protein kinase 6 (395 aa).

Positions 1-35 (MDGGSGQPAADTEMTEAPGGFPAAAPSPQMPGIEN) are disordered. The span at 17–27 (APGGFPAAAPS) shows a compositional bias: low complexity. Positions 63–348 (KPPIMPIGKG…VLDALAHPYL (286 aa)) constitute a Protein kinase domain. Residues 69-77 (IGKGAYGIV) and Lys92 contribute to the ATP site. The Proton acceptor role is filled by Asp189. Residue Thr221 is modified to Phosphothreonine. Positions 221 to 223 (TEY) match the TXY motif. A Phosphotyrosine modification is found at Tyr223. Phosphothreonine is present on Thr226.

The protein belongs to the protein kinase superfamily. CMGC Ser/Thr protein kinase family. MAP kinase subfamily. As to quaternary structure, interacts with MEKK1, MKK1 and MKK2. May form a ternary complex with MEKK1 and MKK1 or MKK2. Interacts with NDPK2, AP2C1, MKP1 and PTP1. Interacts with DSPTP1B/MKP2, especially during HR-like responses triggered by fungal elicitors. Interacts with MKK4, MKK5 and MKK6. Binds to LIP5. Interacts with VQ4 and IKU1/VQ14. Interacts with RACK1A, RACK1B and RACK1C. Interacts with PTP1. Interacts with FLZ9. Binds to BASL and YDA. Post-translationally, dually phosphorylated on Thr-221 and Tyr-223, which activates the enzyme. Dephosphorylated by DSPTP1B/MKP2.

The protein resides in the cytoplasm. The protein localises to the nucleus. Its subcellular location is the cell cortex. The catalysed reaction is L-seryl-[protein] + ATP = O-phospho-L-seryl-[protein] + ADP + H(+). It catalyses the reaction L-threonyl-[protein] + ATP = O-phospho-L-threonyl-[protein] + ADP + H(+). With respect to regulation, activated by threonine and tyrosine phosphorylation. Activated by the MAP kinase kinases MKK2, MKK3, MKK4, MKK5, MKK7 and MKK9. Activated in response to touch, wounding, low temperature, low humidity, salt stress, hydrogen peroxide, ozone, ACC (an ethylene precursor), jasmonic acid (JA), mastoparan and UVC. Activated in response to elicitors: oligogalacturonides, hexameric chitin fragments, fungal xylanase, and the bacterial flagellin and harpin. Activated upon Pseudomonas syringae pv. tomato DC3000 infection. Repressed by the protein phosphatase 2C AP2C1 and the protein-tyrosine-phosphatases MKP1 and PTP1. Repressed by DSPTP1B/MKP2-mediated dephosphorylation. Activated by polarized BASL. Triggered by MKKK20 in response to various abiotic stresses, including osmotic stress, cold and reactive oxygen species (ROS). Activated by MKK5 in response to abscisic acid (ABA). In terms of biological role, mitogen-activated protein kinase (MAPK) which regulates abscisic acid (ABA) responses in a MAPKKK20-MKK5-MPK6 cascade involved in root growth (e.g. root cell division and elongation) and stomatal response. Involved in oxidative stress-mediated signaling cascade (such as ozone). Involved in the innate immune MAP kinase signaling cascade (MEKK1, MKK4/MKK5 and MPK3/MPK6) downstream of bacterial flagellin receptor FLS2. May be involved in hypersensitive response (HR)-mediated signaling cascade by modulating LIP5 phosphorylation and subsequent multivesicular bodies (MVBs) trafficking. May phosphorylate regulators of WRKY transcription factors. Phosphorylates 1-aminocyclopropane-1-carboxylic acid synthases (ACS2 and ACS6) and may be involved in the regulation of bacterial elicitor flagellin-induced ethylene production. Regulates locally gene-mediated and basal resistance response to certain pathogens. May be involved in the cold and salinity stress-mediated MAP kinase signaling cascade (MEKK1, MKK1/MKK2 and MPK4/MPK6). MKK1-MPK6 module mediates abscisic acid (ABA)-dependent CAT1 expression with H(2)O(2) production and response to drought and salt stress. MKK1-MPK6 module is also involved in sugar signaling during the process of seed germination. MKK3-MPK6 module plays an important role in the jasmonate signal transduction pathway through the negative regulation of MYC2/JIN1 expression. MKK9-MPK3/MPK6 module phosphorylates and activates EIN3, leading to the promotion of EIN3-mediated transcription in ethylene signaling. MPK3/MPK6 cascade regulates camalexin synthesis through transcriptional regulation of the biosynthetic genes after pathogen infection. MKK9-MPK6 module positively regulates leaf senescence. YDA-MKK4/MKK5-MPK3/MPK6 module regulates stomatal cell fate before the guard mother cell (GMC) is specified. When activated, reinforces the feedback loop by phosphorylating BASL, and inhibits stomatal fate by phosphorylating SPCH. This MAPK cascade also functions downstream of the ER receptor in regulating coordinated local cell proliferation, which shapes the morphology of plant organs. This chain is Mitogen-activated protein kinase 6, found in Arabidopsis thaliana (Mouse-ear cress).